Here is a 415-residue protein sequence, read N- to C-terminus: JmjC domain-containing protein C (415 aa).

Positions 97–140 are disordered; sequence NEKNNQSNNNNNNNNNNNNNNNNNNNNNNNNNNNNNNNNNNKPK. A compositionally biased stretch (low complexity) spans 104–137; that stretch reads NNNNNNNNNNNNNNNNNNNNNNNNNNNNNNNNNN. Positions 127–302 constitute a JmjC domain; sequence NNNNNNNNNN…ELLKSNKLWC (176 aa).

The protein is JmjC domain-containing protein C (jcdC) of Dictyostelium discoideum (Social amoeba).